A 431-amino-acid chain; its full sequence is UDP-N-acetylmuramate--L-alanine ligase (431 aa).

Position 108 to 114 (108 to 114) interacts with ATP; it reads GSHGKTS.

This sequence belongs to the MurCDEF family.

The protein localises to the cytoplasm. The catalysed reaction is UDP-N-acetyl-alpha-D-muramate + L-alanine + ATP = UDP-N-acetyl-alpha-D-muramoyl-L-alanine + ADP + phosphate + H(+). It functions in the pathway cell wall biogenesis; peptidoglycan biosynthesis. In terms of biological role, cell wall formation. The chain is UDP-N-acetylmuramate--L-alanine ligase from Exiguobacterium sibiricum (strain DSM 17290 / CCUG 55495 / CIP 109462 / JCM 13490 / 255-15).